We begin with the raw amino-acid sequence, 643 residues long: RNA-binding protein RO60 (643 aa).

Positions 63 to 473 (VENNAGGFVF…AFVNAPPTGK (411 aa)) constitute a TROVE domain. Residues 186–390 (RTPTHLFEFV…SMPMTAMIRN (205 aa)) are RNA-binding. A VWFA-like domain region spans residues 465 to 643 (FVNAPPTGKR…IVHEFVTGKI (179 aa)). Positions 482, 484, and 549 each coordinate a divalent metal cation.

It belongs to the Ro 60 kDa family.

The protein localises to the cytoplasm. Functionally, RNA-binding protein that binds to misfolded non-coding RNAs, pre-5S rRNA, and several small cytoplasmic RNA molecules known as Y RNAs. This is RNA-binding protein RO60 from Caenorhabditis elegans.